Consider the following 133-residue polypeptide: Snaclec echicetin subunit alpha (133 aa).

3 disulfides stabilise this stretch: cysteine 4–cysteine 15, cysteine 31–cysteine 127, and cysteine 102–cysteine 119. The C-type lectin domain occupies 11–128 (YEGHCYQLFR…CEFKFPFVCK (118 aa)).

This sequence belongs to the snaclec family. As to quaternary structure, heterodimer of subunits alpha and beta; disulfide-linked. Forms an active complex with the pentameric immunoglobuline Mkappa (IgMkappa). As to expression, expressed by the venom gland.

It is found in the secreted. Functionally, echicetin itself inhibits aggregation of washed platelets induced by vWF, thrombin or alboaggregin-A. However, when complexed with the pentameric plasma immunoglobulin Mkappa (IgMkappa), echicetin binds specifically to GPIb and activates platelets. This is caused by P-selectin expression and activation of alpha-IIb/beta-3 as well as tyrosine phosphorylation of several signal transduction molecules, including p53/56(LYN), p64, p72(SYK), p70 to p90, and p120. In vivo, it induces thrombocytopenia when injected into mice, probably accounting of activation of platelets rather than inhibition. The chain is Snaclec echicetin subunit alpha from Echis carinatus sochureki (Saw-scaled viper).